Consider the following 1442-residue polypeptide: ABC transporter G family member 35 (1442 aa).

In terms of domain architecture, ABC transporter 1 spans 169 to 442; sequence LGMIGIRLAK…FESFGFKCPE (274 aa). An ATP-binding site is contributed by 202–209; the sequence is GPPSSGKT. An ABC transmembrane type-2 1 domain is found at 520–733; sequence ELLKSCWDKE…AFNAITVNEL (214 aa). The next 7 helical transmembrane spans lie at 538–558, 573–593, 619–639, 657–677, 683–703, 714–734, and 769–789; these read FFYVFKTVQIIIIAAITSTLY, IYVGSLLFAMIVNMFNGLAEM, LPTFLLGIPISIFESTAWMVV, FLIIFLIQQMAAGIFRFIAST, IANTGGVLVLLVVFLTGGFLL, WAYWISPLSYAFNAITVNELF, and IGVGGLLGFTVIFNGFFTLAL. In terms of domain architecture, ABC transporter 2 spans 840–1092; it reads MSFDDVKYFV…KVVEYFESFP (253 aa). ATP is bound at residue 885-892; the sequence is GVSGAGKT. Positions 1165–1379 constitute an ABC transmembrane type-2 2 domain; it reads GQFKSCLWKQ…TIYGLITSQY (215 aa). 7 helical membrane-spanning segments follow: residues 1186 to 1206, 1218 to 1238, 1272 to 1292, 1299 to 1319, 1329 to 1349, 1357 to 1377, and 1414 to 1434; these read LVRFIFTLATSLMIGSVFWQI, MVIGAIYAAVVFVGINNCSTV, LPYVLIQTTYYSLIIYSMVGF, FLWFIFINYFSFLYWTYYGMM, VASIFASAFYGIFNLFSGFFI, WWVWYYWICPVAWTIYGLITS, and PVAGVLVGFTVFFAFIFAFCI.

This sequence belongs to the ABC transporter superfamily. ABCG family. PDR (TC 3.A.1.205) subfamily. Ubiquitous with higher levels in roots.

Its subcellular location is the membrane. In terms of biological role, may be a general defense protein. In Arabidopsis thaliana (Mouse-ear cress), this protein is ABC transporter G family member 35 (ABCG35).